Reading from the N-terminus, the 859-residue chain is Low-density lipoprotein receptor-related protein 12 (859 aa).

Residues 1-32 (MARRWSTKESPRWRSALLLLFLAGVYGNGALA) form the signal peptide. Residues 33-492 (EHSENVHISG…ENCPVIVPTR (460 aa)) lie on the Extracellular side of the membrane. Intrachain disulfides connect cysteine 47/cysteine 76 and cysteine 103/cysteine 122. The CUB 1 domain occupies 47 to 159 (CGETPEQIRA…KGFRLAYFSG (113 aa)). Asparagine 75 is a glycosylation site (N-linked (GlcNAc...) asparagine). The N-linked (GlcNAc...) asparagine glycan is linked to asparagine 146. LDL-receptor class A domains lie at 165–201 (NCAC…EICA) and 214–255 (PCAY…IDCD). Disulfide bonds link cysteine 166–cysteine 178, cysteine 173–cysteine 191, cysteine 185–cysteine 200, cysteine 215–cysteine 232, cysteine 222–cysteine 245, cysteine 239–cysteine 254, and cysteine 259–cysteine 285. The 114-residue stretch at 259 to 372 (CGQWLKYFYG…RGFNATYQVD (114 aa)) folds into the CUB 2 domain. N-linked (GlcNAc...) asparagine glycans are attached at residues asparagine 284 and asparagine 366. LDL-receptor class A domains follow at residues 374 to 411 (FCLP…INCT), 412 to 449 (MCQK…KNCF), and 450 to 486 (FCQP…ENCP). 9 cysteine pairs are disulfide-bonded: cysteine 375/cysteine 388, cysteine 382/cysteine 401, cysteine 395/cysteine 410, cysteine 413/cysteine 426, cysteine 420/cysteine 439, cysteine 433/cysteine 448, cysteine 451/cysteine 463, cysteine 458/cysteine 476, and cysteine 470/cysteine 485. N-linked (GlcNAc...) asparagine glycosylation occurs at asparagine 409. N-linked (GlcNAc...) asparagine glycosylation is present at asparagine 441. Residues 493 to 513 (VITAAVIGSLICGLLLVIALG) traverse the membrane as a helical segment. Topologically, residues 514–859 (CTCKLYSLRM…TSDDEALLLC (346 aa)) are cytoplasmic. 4 disordered regions span residues 623 to 678 (ADGD…LPQK), 693 to 723 (ASSS…SPAR), 748 to 770 (SSVS…REDD), and 802 to 823 (QGQG…SNRD). Polar residues-rich tracts occupy residues 748–757 (SSVSQNQSPL) and 802–814 (QGQG…NATN).

Belongs to the LDLR family. In terms of assembly, may interact with RACK1, ZFYVE9 and NMRK2.

The protein resides in the membrane. It localises to the coated pit. In terms of biological role, probable receptor, which may be involved in the internalization of lipophilic molecules and/or signal transduction. May act as a tumor suppressor. This is Low-density lipoprotein receptor-related protein 12 (LRP12) from Pongo abelii (Sumatran orangutan).